The sequence spans 400 residues: Phosphoglycerate kinase (400 aa).

Substrate-binding positions include 22–24 (DFN), arginine 38, 61–64 (HLGR), arginine 119, and arginine 152. ATP is bound by residues lysine 205, glycine 296, glutamate 327, and 353–356 (GGDT).

The protein belongs to the phosphoglycerate kinase family. As to quaternary structure, monomer.

Its subcellular location is the cytoplasm. The enzyme catalyses (2R)-3-phosphoglycerate + ATP = (2R)-3-phospho-glyceroyl phosphate + ADP. It functions in the pathway carbohydrate degradation; glycolysis; pyruvate from D-glyceraldehyde 3-phosphate: step 2/5. The sequence is that of Phosphoglycerate kinase from Campylobacter jejuni subsp. doylei (strain ATCC BAA-1458 / RM4099 / 269.97).